A 506-amino-acid chain; its full sequence is Histidine ammonia-lyase (506 aa).

The 5-imidazolinone (Ala-Gly) cross-link spans 143 to 145; sequence ASG. S144 is subject to 2,3-didehydroalanine (Ser).

Belongs to the PAL/histidase family. Contains an active site 4-methylidene-imidazol-5-one (MIO), which is formed autocatalytically by cyclization and dehydration of residues Ala-Ser-Gly.

The protein resides in the cytoplasm. It catalyses the reaction L-histidine = trans-urocanate + NH4(+). Its pathway is amino-acid degradation; L-histidine degradation into L-glutamate; N-formimidoyl-L-glutamate from L-histidine: step 1/3. This chain is Histidine ammonia-lyase, found in Salmonella paratyphi C (strain RKS4594).